Here is a 456-residue protein sequence, read N- to C-terminus: NADPH-ferredoxin reductase FprA (456 aa).

Positions 14, 40, 48, and 84 each coordinate FAD. NADP(+)-binding positions include Arg110, 155-158 (NGNV), 199-200 (RR), and Glu211. Residues Trp359 and 366–368 (GVI) each bind FAD. Gly366 serves as a coordination point for NADP(+).

The protein belongs to the ferredoxin--NADP reductase type 1 family. As to quaternary structure, monomer. FAD is required as a cofactor.

It catalyses the reaction 2 reduced [2Fe-2S]-[ferredoxin] + NADP(+) + H(+) = 2 oxidized [2Fe-2S]-[ferredoxin] + NADPH. Its function is as follows. May serve as electron transfer protein and supply electrons to P450 systems. The sequence is that of NADPH-ferredoxin reductase FprA (fprA) from Mycobacterium tuberculosis (strain CDC 1551 / Oshkosh).